Consider the following 99-residue polypeptide: Progonadoliberin-1 (99 aa).

Positions 1–26 (MAAQTFALRLLLVGTLLGTLLGQGCC) are cleaved as a signal peptide. A Pyrrolidone carboxylic acid modification is found at Gln27. The residue at position 36 (Gly36) is a Glycine amide.

Belongs to the GnRH family.

Its subcellular location is the secreted. Functionally, stimulates the secretion of gonadotropins. This Dicentrarchus labrax (European seabass) protein is Progonadoliberin-1 (gnrh1).